The primary structure comprises 124 residues: Small ribosomal subunit protein uS12 (124 aa).

3-methylthioaspartic acid is present on aspartate 89. N6-acetyllysine is present on lysine 108.

This sequence belongs to the universal ribosomal protein uS12 family. In terms of assembly, part of the 30S ribosomal subunit. Contacts proteins S8 and S17. May interact with IF1 in the 30S initiation complex.

With S4 and S5 plays an important role in translational accuracy. In terms of biological role, interacts with and stabilizes bases of the 16S rRNA that are involved in tRNA selection in the A site and with the mRNA backbone. Located at the interface of the 30S and 50S subunits, it traverses the body of the 30S subunit contacting proteins on the other side and probably holding the rRNA structure together. The combined cluster of proteins S8, S12 and S17 appears to hold together the shoulder and platform of the 30S subunit. The protein is Small ribosomal subunit protein uS12 of Escherichia coli O6:K15:H31 (strain 536 / UPEC).